A 346-amino-acid chain; its full sequence is Peripherin-2 (346 aa).

Topologically, residues 1 to 18 (MALLKVKFDQKKRVKLAQ) are cytoplasmic. A helical transmembrane segment spans residues 19–41 (GLWLMNWFSVLAGIIIFGLGLFL). Topologically, residues 42-62 (KIELRKRSDVMNNSESHFVPN) are lumenal. N53 carries an N-linked (GlcNAc...) asparagine glycan. The helical transmembrane segment at 63-79 (SLIGVGVLSCVFNSLAG) threads the bilayer. Residues 80-101 (KICYDALDPAKYAKWKPWLKPY) are Cytoplasmic-facing. The chain crosses the membrane as a helical span at residues 102-122 (LAVCVLFNVVLFLVALCCFLL). Topologically, residues 123-264 (RGSLESTLAH…LSYYSNLMNT (142 aa)) are lumenal. N-linked (GlcNAc...) asparagine glycans are attached at residues N229 and N263. A helical membrane pass occupies residues 265-283 (TGAVTLLVWLFEVTITVGL). Residues 284–346 (RYLHTALEGM…EDAGQAPAAG (63 aa)) lie on the Cytoplasmic side of the membrane. Residues 341–346 (QAPAAG) form an interaction with MREG region.

The protein belongs to the PRPH2/ROM1 family. As to quaternary structure, homodimer; disulfide-linked. Forms a homotetramer. Forms a heterotetramer with ROM1. Homotetramer and heterotetramer core complexes go on to form higher order complexes by formation of intermolecular disulfide bonds. Interacts with MREG. Interacts with STX3. Interacts with SNAP25. In terms of tissue distribution, retina (photoreceptor). In rim region of ROS (rod outer segment) disks.

The protein resides in the membrane. Its subcellular location is the cell projection. It is found in the cilium. The protein localises to the photoreceptor outer segment. It localises to the photoreceptor inner segment. In terms of biological role, essential for retina photoreceptor outer segment disk morphogenesis, may also play a role with ROM1 in the maintenance of outer segment disk structure. Required for the maintenance of retinal outer nuclear layer thickness. Required for the correct development and organization of the photoreceptor inner segment. In Bos taurus (Bovine), this protein is Peripherin-2 (PRPH2).